Here is a 417-residue protein sequence, read N- to C-terminus: Gamma-glutamyl phosphate reductase (417 aa).

Belongs to the gamma-glutamyl phosphate reductase family.

It localises to the cytoplasm. It carries out the reaction L-glutamate 5-semialdehyde + phosphate + NADP(+) = L-glutamyl 5-phosphate + NADPH + H(+). It participates in amino-acid biosynthesis; L-proline biosynthesis; L-glutamate 5-semialdehyde from L-glutamate: step 2/2. Functionally, catalyzes the NADPH-dependent reduction of L-glutamate 5-phosphate into L-glutamate 5-semialdehyde and phosphate. The product spontaneously undergoes cyclization to form 1-pyrroline-5-carboxylate. This is Gamma-glutamyl phosphate reductase from Sodalis glossinidius (strain morsitans).